A 501-amino-acid chain; its full sequence is IQ domain-containing protein M (501 aa).

Over residues 237–247 (ERQPIKPEPKS) the composition is skewed to basic and acidic residues. Positions 237-262 (ERQPIKPEPKSQPRIKGTPNKTDKLD) are disordered. The region spanning 290–319 (LIRMVTVMQAHVRGWLERKRLQRVMTKALD) is the IQ domain.

This Homo sapiens (Human) protein is IQ domain-containing protein M.